We begin with the raw amino-acid sequence, 123 residues long: NADH-quinone oxidoreductase subunit A (123 aa).

A run of 3 helical transmembrane segments spans residues 11 to 31, 67 to 87, and 92 to 112; these read FPVL…VSIG, LVAI…PWGV, and IGWP…LGFA.

This sequence belongs to the complex I subunit 3 family. In terms of assembly, NDH-1 is composed of 14 different subunits. Subunits NuoA, H, J, K, L, M, N constitute the membrane sector of the complex.

The protein localises to the cell inner membrane. The enzyme catalyses a quinone + NADH + 5 H(+)(in) = a quinol + NAD(+) + 4 H(+)(out). Its function is as follows. NDH-1 shuttles electrons from NADH, via FMN and iron-sulfur (Fe-S) centers, to quinones in the respiratory chain. The immediate electron acceptor for the enzyme in this species is believed to be ubiquinone. Couples the redox reaction to proton translocation (for every two electrons transferred, four hydrogen ions are translocated across the cytoplasmic membrane), and thus conserves the redox energy in a proton gradient. The sequence is that of NADH-quinone oxidoreductase subunit A from Paraburkholderia phymatum (strain DSM 17167 / CIP 108236 / LMG 21445 / STM815) (Burkholderia phymatum).